Consider the following 422-residue polypeptide: Ameloblastin (422 aa).

Positions Met-1–Ala-26 are cleaved as a signal peptide. At Pro-42 the chain carries Hydroxyproline. The residue at position 48 (Ser-48) is a Phosphoserine. Residue Ser-117 is glycosylated (O-linked (GalNAc...) serine). The interval Gly-271–Leu-321 is disordered.

The protein belongs to the ameloblastin family. As to expression, ameloblast-specific.

The protein localises to the secreted. The protein resides in the extracellular space. It is found in the extracellular matrix. In terms of biological role, involved in the mineralization and structural organization of enamel. This Rattus norvegicus (Rat) protein is Ameloblastin (Ambn).